We begin with the raw amino-acid sequence, 1010 residues long: MVIKKLFILIFCLFLIINEINGKKTKINDIKKSKPKLSSTLLNVHIVAHTHDDVGWLKTVDEYYYGSNMSIAFAGVQYTLDTAITCLLANPERKFIYVEIAFFQRWWDEQSTTMQNIVKGLVESGQLEFINGGYCMNDEATTYYDDTIDQMTLGHQFLWENFGVMPKIGWHIDPFGHSATQARIFGQLGFDAFIIGRMDYQDIEARLENKQMEFMWRSTQSTPENQVFTSVLRAMYCTPDGFNFEQGDDPIQDDPNLFDNNVDSRAEQFTQVALEYATHYRTNNVLIPFGCDFAYLNAQMYYKNIDKLIAHINSNPDKYGLNLLYSTPSIYIDAVNDANLVWEVKTDDLFPYADNEFSYWTGYFVSRPALKGYVRQNNALLHVVEQMLVTSSNLMPSSRSEQLVDDIVIMREVMGIAQHHDAVSGTEQQHVADDYAERLSIGNCASLETINTVVGTLLTANGNSKSAAATPTISFCPLLNQSICPATDPLSSGTSVPVLIYNSLSWTRNEPVRIPIPIANVTVTSSSNGSITSQVNQINGTFILEFLATIPPLGYSTYIITSTASDFVEPNSIPAIIIQDEIIVSGGGKINEKVSYNDPIILENDYINVQFSSQDGSILSITNKTSGVTSSITQEYIWYNPSVGNDDSAQCSGAYIFRPVEDFAYPYNNATPSVSIIRGEISSSIRRFWSNEMVQTFRLYSNADHLEVEEIIGPIDISDGIGKEIVSRYTTTLVTDQTWYSDSQGMEMQKRITNYRPSWNLTVVQPTSGNYVPVNAIAYIQDPNQSLQFTIVTDRSRGCASLRDGQLDMMMHRRTLKDDGRGVGQPMNESTQIVTTSKLIFHDISSYAQSHYRPAALSLSHPLLPMFTTTQQSSNDWNSQYQGVYSPLTSASPLPNGLKIQTLQWLDNQDNTILLRIENIYQIDGQDSQDPQTITLDLSTIFSTITITSATEMNLTGVQKLSNLSRLKWKTVDGKNYDHKSSSSTKEDSSNGFVFTFSPMQIRTFIITTN.

A signal peptide spans Met-1–Gly-22. Residues Lys-23 to Thr-40 constitute a propeptide, pro I. Zn(2+)-binding residues include His-51 and Asp-53. Residue Asn-68 is glycosylated (N-linked (GlcNAc...) asparagine). Zn(2+)-binding residues include Asp-173 and His-420. Asp-173 acts as the Nucleophile in catalysis. N-linked (GlcNAc...) asparagine glycans are attached at residues Asn-480, Asn-520, Asn-528, Asn-539, Asn-623, Asn-760, Asn-784, Asn-828, Asn-954, and Asn-963. A propeptide spans Arg-508–Ser-595 (pro II).

This sequence belongs to the glycosyl hydrolase 38 family. Tetramer of equimolar amounts of 60 and 58 kDa subunits. Requires Zn(2+) as cofactor. In terms of processing, first cleaved into the mature 58 kDa subunit and an intermediate 82 kDa subunit. The latter is then cleaved to its mature 60 kDa subunit form. These events occur in multiple intracellular compartments. The 60 kDa subunit may form one or more intramolecular disulfide bonds.

It localises to the lysosome. It catalyses the reaction Hydrolysis of terminal, non-reducing alpha-D-mannose residues in alpha-D-mannosides.. In Dictyostelium discoideum (Social amoeba), this protein is Lysosomal alpha-mannosidase (manA).